The chain runs to 399 residues: 5'-C-glycyluridine monooxygenase-decarboxylase (399 aa).

Thr179 is a phosphate binding site. The residue at position 230 (Lys230) is an N6-(pyridoxal phosphate)lysine. Phosphate is bound by residues Arg318, Arg322, Arg353, and Arg367.

Belongs to the SelA family. As to quaternary structure, homooctamer; tetramer of homodimers. Pyridoxal 5'-phosphate serves as cofactor.

The enzyme catalyses (5'S,6'R)-C-glycyluridine + O2 = uridine-5'-carboxamide + CO2 + H2O. The protein operates within antibiotic biosynthesis. Its activity is regulated as follows. Activity is dependent on phosphate. Its function is as follows. Monooxygenase-decarboxylase involved in the biosynthesis of the capuramycin-type nucleoside antibiotic A-503083. Catalyzes the oxidative decarboxylation of 5'-C-glycyluridine (GlyU) to uridine-5'-carboxamide (CarU). Is stereospecific for the (5'S,6'R)-diastereomer of GlyU. Directly incorporates a single oxygen atom from O(2) into the product CarU. In Streptomyces sp, this protein is 5'-C-glycyluridine monooxygenase-decarboxylase.